The primary structure comprises 527 residues: Methane monooxygenase component A alpha chain (527 aa).

Positions 114, 144, and 147 each coordinate Fe cation. Residue Cys151 is part of the active site. Positions 209, 243, and 246 each coordinate Fe cation.

Belongs to the TmoA/XamoA family. M.capsulatus has two forms of methane monooxygenase, a soluble and a membrane-bound type. The soluble type consists of four components (A to D): protein A, comprising three chains, in an alpha-2, beta-2, gamma-2 configuration, is a nonheme iron protein containing an unusual mu-hydroxo bridge structure at its active site and interacts with both oxygen and methane. Fe cation serves as cofactor.

It catalyses the reaction methane + NADH + O2 + H(+) = methanol + NAD(+) + H2O. The enzyme catalyses methane + NADPH + O2 + H(+) = methanol + NADP(+) + H2O. Responsible for the initial oxygenation of methane to methanol in methanotrophs. It also catalyzes the monohydroxylation of a variety of unactivated alkenes, alicyclic, aromatic and heterocyclic compounds. This chain is Methane monooxygenase component A alpha chain (mmoX), found in Methylococcus capsulatus (strain ATCC 33009 / NCIMB 11132 / Bath).